The chain runs to 296 residues: Nucleotide-binding protein spr1424 (296 aa).

Glycine 13–threonine 20 provides a ligand contact to ATP. A GTP-binding site is contributed by aspartate 63 to serine 66.

The protein belongs to the RapZ-like family.

Its function is as follows. Displays ATPase and GTPase activities. The chain is Nucleotide-binding protein spr1424 from Streptococcus pneumoniae (strain ATCC BAA-255 / R6).